The following is a 455-amino-acid chain: Fez family zinc finger protein 2 (455 aa).

The interval 1-22 (MASSASLETMVPPACPRAGASP) is disordered. The Engrailed homology 1 repressor motif lies at 27–42 (TLAFSIERIMAKTSEP). 6 C2H2-type zinc fingers span residues 272-294 (FTCE…MPVH), 300-322 (FVCK…KIIH), 328-350 (HKCN…IRIH), 356-378 (FVCE…KLTH), 384-406 (YKCT…MHTH), and 412-435 (FTCA…RKLH).

Belongs to the krueppel C2H2-type zinc-finger protein family. As to expression, highly expressed in neocortical layer V, moderately expressed in layer VI. Expressed in subcortically projecting neurons.

Its subcellular location is the nucleus. Functionally, transcription repressor. Required for the specification of corticospinal motor neurons and other subcerebral projection neurons. May play a role in layer and neuronal subtype-specific patterning of subcortical projections and axonal fasciculation. Controls the development of dendritic arborization and spines of large layer V pyramidal neurons. Plays a role in rostro-caudal patterning of the diencephalon and in prethalamic formation. This is Fez family zinc finger protein 2 (Fezf2) from Mus musculus (Mouse).